A 111-amino-acid polypeptide reads, in one-letter code: Large ribosomal subunit protein uL22 (111 aa).

Belongs to the universal ribosomal protein uL22 family. Part of the 50S ribosomal subunit.

In terms of biological role, this protein binds specifically to 23S rRNA; its binding is stimulated by other ribosomal proteins, e.g. L4, L17, and L20. It is important during the early stages of 50S assembly. It makes multiple contacts with different domains of the 23S rRNA in the assembled 50S subunit and ribosome. The globular domain of the protein is located near the polypeptide exit tunnel on the outside of the subunit, while an extended beta-hairpin is found that lines the wall of the exit tunnel in the center of the 70S ribosome. This Clostridium beijerinckii (strain ATCC 51743 / NCIMB 8052) (Clostridium acetobutylicum) protein is Large ribosomal subunit protein uL22.